We begin with the raw amino-acid sequence, 249 residues long: T-cell immunoreceptor with Ig and ITIM domains (249 aa).

The first 28 residues, 1–28, serve as a signal peptide directing secretion; it reads MHGWLLLVWVQGLIQAAFLATAIGATAG. The Ig-like V-type domain maps to 29–127; the sequence is TIDTKRNISA…GGIYKGRIFL (99 aa). The Extracellular segment spans residues 29 to 148; the sequence is TIDTKRNISA…LAQFQTAPLG (120 aa). The tract at residues 35–45 is homodimerization; that stretch reads NISAEEGGSVI. C48 and C111 are joined by a disulfide. N104 carries N-linked (GlcNAc...) asparagine glycosylation. The helical transmembrane segment at 149–169 threads the bilayer; the sequence is GTMAAVLGLICLMVTGVTVLA. Over 170 to 249 the chain is Cytoplasmic; sequence RKDKSIRMHS…ESFIAVSKTG (80 aa). Residues 182 to 222 are disordered; sequence SGLGRTEAEPQEWNLRSLSSPGSPVQTQTAPAGPCGEQAED. Over residues 195-211 the composition is skewed to polar residues; it reads NLRSLSSPGSPVQTQTA. The ITIM motif signature appears at 234-239; that stretch reads LSYRSL.

Homodimer in cis; binds with high affinity to PVR, forming a heterotetrameric assembly of two TIGIT and two PVR molecules. Binds with lower affinity to NECTIN2 and NECTIN3. Interacts with GRB2. Interacts with NECTIN4.

The protein resides in the cell membrane. In terms of biological role, inhibitory receptor that plays a role in the modulation of immune responses. Suppresses T-cell activation by promoting the generation of mature immunoregulatory dendritic cells. Upon binding to its ligands PVR/CD155 or NECTIN2/CD112, which are expressed on antigen-presenting cells, sends inhibitory signals to the T-cell or NK cell. Mechanistically, interaction with ligand leads to phosphorylation of the cytoplasmic tail by Src family tyrosine kinases such as FYN or LCK, allowing subsequent binding to adapter GRB2 and SHIP1/INPP5D. In turn, inhibits PI3K and MAPK signaling cascades. In addition, associates with beta-arrestin-2/ARRB2 to recruit SHIP1/INPP5D that suppresses autoubiquitination of TRAF6 and subsequently inhibits NF-kappa-B signaling pathway. Also acts as a receptor for NECTIN4 to inhibit NK cell cytotoxicity. This chain is T-cell immunoreceptor with Ig and ITIM domains, found in Mus musculus (Mouse).